We begin with the raw amino-acid sequence, 213 residues long: Small ribosomal subunit protein uS3 (213 aa).

The KH type-2 domain occupies 38–106 (IRSYIKKLLY…EFSLEVTEVR (69 aa)).

It belongs to the universal ribosomal protein uS3 family. Part of the 30S ribosomal subunit. Forms a tight complex with proteins S10 and S14.

Its function is as follows. Binds the lower part of the 30S subunit head. Binds mRNA in the 70S ribosome, positioning it for translation. This Lawsonia intracellularis (strain PHE/MN1-00) protein is Small ribosomal subunit protein uS3.